Consider the following 1002-residue polypeptide: Lon protease homolog, mitochondrial (1002 aa).

Positions 102 to 313 (VIALPLPHRP…LTLELVKKEM (212 aa)) constitute a Lon N-terminal domain. An ATP-binding site is contributed by 468-475 (GPPGVGKT). Residues 811–995 (QTPVGVVMGL…NEIFDIAFQS (185 aa)) form the Lon proteolytic domain. Catalysis depends on residues Ser-901 and Lys-944.

This sequence belongs to the peptidase S16 family. As to quaternary structure, homohexamer or homoheptamer. Organized in a ring with a central cavity.

The protein resides in the mitochondrion matrix. It catalyses the reaction Hydrolysis of proteins in presence of ATP.. ATP-dependent serine protease that mediates the selective degradation of misfolded, unassembled or oxidatively damaged polypeptides as well as certain short-lived regulatory proteins in the mitochondrial matrix. May also have a chaperone function in the assembly of inner membrane protein complexes. Participates in the regulation of mitochondrial gene expression and in the maintenance of the integrity of the mitochondrial genome. Binds to mitochondrial DNA in a site-specific manner. This Oryza sativa subsp. indica (Rice) protein is Lon protease homolog, mitochondrial.